Consider the following 340-residue polypeptide: Phosphate acyltransferase (340 aa).

This sequence belongs to the PlsX family. In terms of assembly, homodimer. Probably interacts with PlsY.

The protein localises to the cytoplasm. The enzyme catalyses a fatty acyl-[ACP] + phosphate = an acyl phosphate + holo-[ACP]. Its pathway is lipid metabolism; phospholipid metabolism. In terms of biological role, catalyzes the reversible formation of acyl-phosphate (acyl-PO(4)) from acyl-[acyl-carrier-protein] (acyl-ACP). This enzyme utilizes acyl-ACP as fatty acyl donor, but not acyl-CoA. The chain is Phosphate acyltransferase from Pseudomonas syringae pv. syringae (strain B728a).